The sequence spans 144 residues: uncharacterized protein (144 aa).

A coiled-coil region spans residues 24 to 67 (KLKELYQRLNQGINVEEVLKETVEDYKEKMEKYILEVLEEIEKY).

This is an uncharacterized protein from Aquifex aeolicus (strain VF5).